We begin with the raw amino-acid sequence, 115 residues long: Transmembrane protein 218 (115 aa).

A run of 3 helical transmembrane segments spans residues 5-25, 38-58, and 81-101; these read VLGVGAGVFILALLWVAVLLL, FSVIFLFFGAVIITSVLLLFP, and YVLLAFLSAIFLGGLFLVLIH.

Belongs to the TMEM218 family. Interacts with TMEM67.

Its subcellular location is the membrane. The protein localises to the cell projection. It is found in the cilium. In terms of biological role, may be involved in ciliary biogenesis or function. In Homo sapiens (Human), this protein is Transmembrane protein 218 (TMEM218).